The sequence spans 230 residues: Triggering receptor expressed on myeloid cells 1 (230 aa).

The N-terminal stretch at 1–20 (MRKAGLWGLLCVFFVSEVKA) is a signal peptide. In terms of domain architecture, Ig-like V-type spans 21–124 (AIVLEEERYD…IYHPPNDPVV (104 aa)). At 21–202 (AIVLEEERYD…TDADSVSTSS (182 aa)) the chain is on the extracellular side. Cys-41 and Cys-113 form a disulfide bridge. The N-linked (GlcNAc...) asparagine glycan is linked to Asn-191. A helical membrane pass occupies residues 203–223 (VTISVICGLLSKSLVFIILFI). The Cytoplasmic portion of the chain corresponds to 224-230 (VTKRTFG).

As to quaternary structure, monomer. Homomultimer; when activated. Interacts with TYROBP/DAP12. Interacts with TLR4.

It localises to the cell membrane. Functionally, cell surface receptor that plays important roles in innate and adaptive immunity by amplifying inflammatory responses. Upon activation by various ligands such as PGLYRP1, HMGB1 or HSP70, multimerizes and forms a complex with transmembrane adapter TYROBP/DAP12. In turn, initiates a SYK-mediated cascade of tyrosine phosphorylation, activating multiple downstream mediators such as BTK, MAPK1, MAPK3 or phospholipase C-gamma. This cascade promotes the neutrophil- and macrophage-mediated release of pro-inflammatory cytokines and/or chemokines, as well as their migration and thereby amplifies inflammatory responses that are triggered by bacterial and fungal infections. By also promoting the amplification of inflammatory signals that are initially triggered by Toll-like receptor (TLR) and NOD-like receptor engagement, plays a major role in the pathophysiology of acute and chronic inflammatory diseases of different etiologies including septic shock and atherosclerosis. In Mus musculus (Mouse), this protein is Triggering receptor expressed on myeloid cells 1 (Trem1).